The sequence spans 111 residues: Cytochrome c (111 aa).

An N-acetylalanine modification is found at A1. Residues C22, C25, and H26 each coordinate heme c. Residue K80 is modified to N6,N6,N6-trimethyllysine. Residue M88 participates in heme c binding. The residue at position 94 (K94) is an N6,N6,N6-trimethyllysine.

It belongs to the cytochrome c family. In terms of processing, binds 1 heme c group covalently per subunit.

The protein resides in the mitochondrion intermembrane space. Functionally, electron carrier protein. The oxidized form of the cytochrome c heme group can accept an electron from the heme group of the cytochrome c1 subunit of cytochrome reductase. Cytochrome c then transfers this electron to the cytochrome oxidase complex, the final protein carrier in the mitochondrial electron-transport chain. In Brassica napus (Rape), this protein is Cytochrome c.